Consider the following 217-residue polypeptide: LSM12 homolog A (217 aa).

Residues 9–78 enclose the Sm domain; the sequence is VNAVNDCFSI…CSNVQVIKEC (70 aa). One can recognise an AD domain in the interval 86–184; that stretch reads QKLNLEQVKM…IIKQFFNTRP (99 aa). The disordered stretch occupies residues 185–217; sequence SPVPESGAAASTSSPSVSPTSSSLASGSPVPAN. Low complexity predominate over residues 190–217; sequence SGAAASTSSPSVSPTSSSLASGSPVPAN.

This sequence belongs to the LSM12 family. In terms of assembly, component of the Atx2-tyf activator complex, composed of Atx2, tyf, pAbp, Lsm12a. Interacts with tyf, Atx2 and pAbp.

Component of the Atx2-tyf activator complex which functions in the circadian pacemaker neurons to activate the TYF-dependent translation of per and maintain 24 hour periodicity in circadian behaviors. Within the Atx2-tyf complex, likely to function as a molecular adapter which stabilizes the interaction between Atx2 and the translational regulator tyf. The polypeptide is LSM12 homolog A (Drosophila melanogaster (Fruit fly)).